A 545-amino-acid polypeptide reads, in one-letter code: Chaperonin GroEL 1 (545 aa).

Residues 30–33 (TLGP), Lys-51, 87–91 (DGTTT), Gly-415, and Asp-495 contribute to the ATP site.

It belongs to the chaperonin (HSP60) family. As to quaternary structure, forms a cylinder of 14 subunits composed of two heptameric rings stacked back-to-back. Interacts with the co-chaperonin GroES.

Its subcellular location is the cytoplasm. The enzyme catalyses ATP + H2O + a folded polypeptide = ADP + phosphate + an unfolded polypeptide.. Functionally, together with its co-chaperonin GroES, plays an essential role in assisting protein folding. The GroEL-GroES system forms a nano-cage that allows encapsulation of the non-native substrate proteins and provides a physical environment optimized to promote and accelerate protein folding. The chain is Chaperonin GroEL 1 from Rhizobium etli (strain ATCC 51251 / DSM 11541 / JCM 21823 / NBRC 15573 / CFN 42).